The sequence spans 343 residues: MAFLHKTPRIAPPPEGRTGILLINLGTPDDTGYFSVRRYLSEFLSDRRVIESPPLIWQPILQSIILTKRPFASGANYARIWHKEENASPLRVYTRRQAEGLAERLRADGVPVEWGMRYGCPSVAKAVESLMDQGCDRIISIALYPQYSATTTATANDQLFRALMRLRRQPAVLTVPSFPDHPAFIRALETSVQDTLAGLSFKPQQIVASFHGLPKTCIEKGDTYRDECERTISALRQALGLSEEQMPLTFQSRFGPLEWVQPYTAPFVKALPAQGITKIAVIMPGFMVDCLETLDEIGNELREEFMEAGGEEFALVPCLNDSKGAIDLLEDLSRSAMAGFQRG.

His-211 and Glu-292 together coordinate Fe cation.

The protein belongs to the ferrochelatase family.

The protein resides in the cytoplasm. It catalyses the reaction heme b + 2 H(+) = protoporphyrin IX + Fe(2+). It functions in the pathway porphyrin-containing compound metabolism; protoheme biosynthesis; protoheme from protoporphyrin-IX: step 1/1. Catalyzes the ferrous insertion into protoporphyrin IX. The sequence is that of Ferrochelatase from Gluconobacter oxydans (strain 621H) (Gluconobacter suboxydans).